Reading from the N-terminus, the 953-residue chain is Zinc finger protein 618 (953 aa).

Methionine 1 is subject to N-acetylmethionine. Residues 1 to 56 (MSQPDGAAAPQVDGASAPGRKSAVNRERLKRSQKSSKVEGPEPVPAEASLSAEQGT) form a disordered region. Glycyl lysine isopeptide (Lys-Gly) (interchain with G-Cter in SUMO2) cross-links involve residues lysine 63 and lysine 81. 2 consecutive C2H2-type zinc fingers follow at residues 146–168 (YECG…VRAH) and 187–209 (YTCD…RDLH). Residue lysine 238 forms a Glycyl lysine isopeptide (Lys-Gly) (interchain with G-Cter in SUMO2) linkage. The segment at 255 to 277 (YTCEFCGKQYKYYTPYQEHVALH) adopts a C2H2-type 3 zinc-finger fold. Disordered stretches follow at residues 283–305 (APGW…EVTP) and 337–390 (TPPA…SSEP). Over residues 339–354 (PATQTQTFRAPNSGSP) the composition is skewed to polar residues. A compositionally biased stretch (basic and acidic residues) spans 365–379 (FSRRVESKAQNHFEE). Residues 391-413 (YTCGACGIQFQFYSNLLEHMQSH) form a C2H2-type 4 zinc finger. Over residues 419–428 (NNITSNQSRS) the composition is skewed to polar residues. The segment at 419 to 461 (NNITSNQSRSPPAAVEEKWKPQAQRNSANNTTTSGLTPNSVIP) is disordered. Residue lysine 436 forms a Glycyl lysine isopeptide (Lys-Gly) (interchain with G-Cter in SUMO2) linkage. Residues 441–458 (AQRNSANNTTTSGLTPNS) are compositionally biased toward polar residues.

It belongs to the krueppel C2H2-type zinc-finger protein family. In terms of assembly, interacts with UHRF2.

The protein localises to the nucleus. The protein resides in the chromosome. In terms of biological role, regulates UHRF2 function as a specific 5-hydroxymethylcytosine (5hmC) reader by regulating its chromatin localization. This Mus musculus (Mouse) protein is Zinc finger protein 618 (Znf618).